Consider the following 934-residue polypeptide: MVEFSDAILEPIGAVQRTRVGREATEPMRADIRLLGTILGDTLREQNGDEVFDLVERVRVESFRVRRSEIDRADMARMFSGLDIHLAIPIIRAFSHFALLANVAEDIHRERRRHIHLDAGEPLRDSSLAATYAKLDLAKLDSATVADALTGAVVSPVITAHPTETRRRTVFVTQRRITELMRLHAEGHTETADGRSIERELRRQILTLWQTALIRLARLQISDEIDVGLRYYSAALFHVIPQVNSEVRNALRARWPDAELLSGPILQPGSWIGGDRDGNPNVTADVVRRATGSAAYTVVAHYLAELTHLEQELSMSARLITVTPELATLAASCQDAACADEPYRRALRVIRGRLSSTAAHILDQQPPNQLGLGLPPYSTPAELCADLDTIEASLCTHGAALLADDRLALLREGVGVFGFHLCGLDMRQNSDVHEEVVAELLAWAGMHQDYSSLPEDQRVKLLVAELGNRRPLVGDRAQLSDLARGELAVLAAAAHAVELYGSAAVPNYIISMCQSVSDVLEVAILLKETGLLDASGSQPYCPVGISPLFETIDDLHNGAAILHAMLELPLYRTLVAARGNWQEVMLGYSDSNKDGGYLAANWAVYRAELALVDVARKTGIRLRLFHGRGGTVGRGGGPSYQAILAQPPGAVNGSLRLTEQGEVIAAKYAEPQIARRNLESLVAATLESTLLDVEGLGDAAESAYAILDEVAGLARRSYAELVNTPGFVDYFQASTPVSEIGSLNIGNRPTSRKPTTSIADLRAIPWVLAWSQSRVMLPGWYGTGSAFQQWVAAGPESESQRVEMLHDLYQRWPFFRSVLSNMAQVLAKSDLGLAARYAELVVDEALRRRVFDKIADEHRRTIAIHKLITGHDDLLADNPALARSVFNRFPYLEPLNHLQVELLRRYRSGHDDEMVQRGILLTMNGLASALRNSG.

Active-site residues include H161 and K593.

It belongs to the PEPCase type 1 family. It depends on Mg(2+) as a cofactor.

The enzyme catalyses oxaloacetate + phosphate = phosphoenolpyruvate + hydrogencarbonate. Its function is as follows. Forms oxaloacetate, a four-carbon dicarboxylic acid source for the tricarboxylic acid cycle. The protein is Phosphoenolpyruvate carboxylase (ppc) of Mycobacterium leprae (strain TN).